We begin with the raw amino-acid sequence, 258 residues long: Na(+)-translocating NADH-quinone reductase subunit C (258 aa).

A helical membrane pass occupies residues 14-34; sequence LIVVLAVSLICSVIVAGAVVG. The residue at position 226 (Ser226) is an FMN phosphoryl serine.

It belongs to the NqrC family. In terms of assembly, composed of six subunits; NqrA, NqrB, NqrC, NqrD, NqrE and NqrF. It depends on FMN as a cofactor.

The protein localises to the cell inner membrane. It carries out the reaction a ubiquinone + n Na(+)(in) + NADH + H(+) = a ubiquinol + n Na(+)(out) + NAD(+). Its function is as follows. NQR complex catalyzes the reduction of ubiquinone-1 to ubiquinol by two successive reactions, coupled with the transport of Na(+) ions from the cytoplasm to the periplasm. NqrA to NqrE are probably involved in the second step, the conversion of ubisemiquinone to ubiquinol. The sequence is that of Na(+)-translocating NADH-quinone reductase subunit C from Neisseria meningitidis serogroup B (strain ATCC BAA-335 / MC58).